Reading from the N-terminus, the 299-residue chain is Taste receptor type 2 member 1 (299 aa).

At 1–9 (MLESHLIIY) the chain is on the extracellular side. The chain crosses the membrane as a helical span at residues 10–30 (FLLAVIQFLLGIFTNGIIVVV). At 31 to 55 (NGIDLIKHRKMAPLDLLLSCLAVSR) the chain is on the cytoplasmic side. A helical transmembrane segment spans residues 56–76 (IFLQLFIFYVNVIVIFFIEFI). Residues 77 to 81 (MCSAN) lie on the Extracellular side of the membrane. A helical transmembrane segment spans residues 82 to 102 (CAILLFVNELELWLATWLGVF). Topologically, residues 103–124 (YCAKVASVRHPLFIWLKMRISK) are cytoplasmic. The helical transmembrane segment at 125-145 (LVPWMILGSLLYVSMICVFHS) threads the bilayer. The Extracellular portion of the chain corresponds to 146–178 (KYAGFMVPHFLRNFFSQNATIQKEDTLAIQIFS). An N-linked (GlcNAc...) asparagine glycan is attached at N163. Residues 179–199 (FVAEFSVPLLIFLVAVLLLIF) form a helical membrane-spanning segment. Residues 200-222 (SLGRHTRQMRNTVAGSRVPGRGA) lie on the Cytoplasmic side of the membrane. Residues 223–243 (PISALLSILSFLILYFSHCMI) form a helical membrane-spanning segment. Topologically, residues 244 to 257 (KVFLSSLKFHVRRF) are extracellular. The helical transmembrane segment at 258-278 (IFLFFILVIGIYPSGHSLILI) threads the bilayer. Residues 279–299 (LGNPKLKQNAKKFLLHSKCCQ) are Cytoplasmic-facing.

The protein belongs to the G-protein coupled receptor T2R family.

The protein localises to the membrane. In terms of biological role, receptor that may play a role in the perception of bitterness and is gustducin-linked. May play a role in sensing the chemical composition of the gastrointestinal content. The activity of this receptor may stimulate alpha gustducin, mediate PLC-beta-2 activation and lead to the gating of TRPM5. The sequence is that of Taste receptor type 2 member 1 (TAS2R1) from Pan paniscus (Pygmy chimpanzee).